Consider the following 365-residue polypeptide: UDP-N-acetylglucosamine--N-acetylmuramyl-(pentapeptide) pyrophosphoryl-undecaprenol N-acetylglucosamine transferase (365 aa).

Residues 12-14, asparagine 123, arginine 166, serine 194, and glutamine 295 contribute to the UDP-N-acetyl-alpha-D-glucosamine site; that span reads TGG.

It belongs to the glycosyltransferase 28 family. MurG subfamily.

The protein resides in the cell inner membrane. It catalyses the reaction di-trans,octa-cis-undecaprenyl diphospho-N-acetyl-alpha-D-muramoyl-L-alanyl-D-glutamyl-meso-2,6-diaminopimeloyl-D-alanyl-D-alanine + UDP-N-acetyl-alpha-D-glucosamine = di-trans,octa-cis-undecaprenyl diphospho-[N-acetyl-alpha-D-glucosaminyl-(1-&gt;4)]-N-acetyl-alpha-D-muramoyl-L-alanyl-D-glutamyl-meso-2,6-diaminopimeloyl-D-alanyl-D-alanine + UDP + H(+). It participates in cell wall biogenesis; peptidoglycan biosynthesis. Functionally, cell wall formation. Catalyzes the transfer of a GlcNAc subunit on undecaprenyl-pyrophosphoryl-MurNAc-pentapeptide (lipid intermediate I) to form undecaprenyl-pyrophosphoryl-MurNAc-(pentapeptide)GlcNAc (lipid intermediate II). The chain is UDP-N-acetylglucosamine--N-acetylmuramyl-(pentapeptide) pyrophosphoryl-undecaprenol N-acetylglucosamine transferase from Phenylobacterium zucineum (strain HLK1).